We begin with the raw amino-acid sequence, 440 residues long: O-glycoside alpha-1,2-mannosyltransferase homolog 4 (440 aa).

Over 1 to 35 (MLGWNKHVFFSESRINFRCLLRKKLKKRCPLSARF) the chain is Cytoplasmic. A helical; Signal-anchor for type II membrane protein membrane pass occupies residues 36 to 56 (VLVLLLIVLIFILKMGYKQLI). Topologically, residues 57-440 (YKLNHPPLRR…NLIGDGFLDE (384 aa)) are lumenal. E336 (nucleophile) is an active-site residue.

The protein belongs to the glycosyltransferase 15 family.

It is found in the cytoplasm. The protein resides in the nucleus. Its subcellular location is the golgi apparatus membrane. In terms of biological role, probable mannosyltransferase involved in O-glycosylation of cell wall and secreted proteins. Transfers an alpha-D-mannosyl residue from GDP-mannose into lipid-linked oligosaccharide, forming an alpha-(1-&gt;2)-D-mannosyl-D-mannose linkage. This chain is O-glycoside alpha-1,2-mannosyltransferase homolog 4 (omh4), found in Schizosaccharomyces pombe (strain 972 / ATCC 24843) (Fission yeast).